A 298-amino-acid polypeptide reads, in one-letter code: UDP-N-acetylenolpyruvoylglucosamine reductase (298 aa).

Residues 26-191 (KTGGAADVFV…LDATFSLALE (166 aa)) enclose the FAD-binding PCMH-type domain. Arg170 is an active-site residue. Ser220 (proton donor) is an active-site residue. The active site involves Glu290.

Belongs to the MurB family. It depends on FAD as a cofactor.

Its subcellular location is the cytoplasm. The catalysed reaction is UDP-N-acetyl-alpha-D-muramate + NADP(+) = UDP-N-acetyl-3-O-(1-carboxyvinyl)-alpha-D-glucosamine + NADPH + H(+). It functions in the pathway cell wall biogenesis; peptidoglycan biosynthesis. Cell wall formation. This is UDP-N-acetylenolpyruvoylglucosamine reductase from Listeria monocytogenes serovar 1/2a (strain ATCC BAA-679 / EGD-e).